The sequence spans 353 residues: MINRRKTRPVYVGNVKIGDGAPIVVQSMTDTKTHDIEATLNQINRLAKAGCEIIRVAVPREEDALALQEIVKNSPIPVIGDIHFSPRIAFLSLESGIHGIRLNPGNINDKGKIKEILQECKKKNIAVRLGVNSGSLEERLLEKYGYPSAEALAESALYWSEFFESVGFTNFKVSIKGSDVLQNIKANKIFAEKTDIPLHIGITEAGPAGRGSIKSAVGIGILLYEGIGDTVRVSLTADPEEEIKVVYQILQALDLRRKGVEIVSCPTCGRIEVNLPEVVKKVEEKLEAVDKPLKVAIMGCVVNAIGEAKEADIGLACGNKSAILFKKGVPIKRVSEEEMVEELLNEIQRMDNE.

Residues Cys265, Cys268, Cys300, and Glu307 each contribute to the [4Fe-4S] cluster site.

Belongs to the IspG family. The cofactor is [4Fe-4S] cluster.

The enzyme catalyses (2E)-4-hydroxy-3-methylbut-2-enyl diphosphate + oxidized [flavodoxin] + H2O + 2 H(+) = 2-C-methyl-D-erythritol 2,4-cyclic diphosphate + reduced [flavodoxin]. It functions in the pathway isoprenoid biosynthesis; isopentenyl diphosphate biosynthesis via DXP pathway; isopentenyl diphosphate from 1-deoxy-D-xylulose 5-phosphate: step 5/6. Its function is as follows. Converts 2C-methyl-D-erythritol 2,4-cyclodiphosphate (ME-2,4cPP) into 1-hydroxy-2-methyl-2-(E)-butenyl 4-diphosphate. The polypeptide is 4-hydroxy-3-methylbut-2-en-1-yl diphosphate synthase (flavodoxin) (Sulfurihydrogenibium sp. (strain YO3AOP1)).